The primary structure comprises 1113 residues: Coiled-coil domain-containing protein 158 (1113 aa).

The segment covering methionine 1–leucine 14 has biased composition (polar residues). The interval methionine 1–serine 26 is disordered. The span at serine 15–serine 26 shows a compositional bias: low complexity. Coiled-coil stretches lie at residues glycine 72 to glutamate 183 and valine 243 to glutamate 833. Disordered stretches follow at residues leucine 848 to arginine 902 and cysteine 955 to threonine 1062. 5 stretches are compositionally biased toward polar residues: residues alanine 867–asparagine 894, cysteine 955–threonine 974, phenylalanine 994–lysine 1017, leucine 1024–arginine 1040, and aspartate 1053–threonine 1062. Residues threonine 1061–lysine 1113 adopt a coiled-coil conformation.

This is Coiled-coil domain-containing protein 158 (CCDC158) from Homo sapiens (Human).